A 301-amino-acid chain; its full sequence is 1,5-anhydro-D-fructose reductase (301 aa).

D35 is an NADP(+) binding site. The Proton donor role is filled by Y40. Residue H102 participates in substrate binding. NADP(+) contacts are provided by residues Q175 and 246 to 258 (IPKSVTPSRIREN).

Belongs to the aldo/keto reductase family. As to quaternary structure, monomer.

It localises to the cytoplasm. The enzyme catalyses 1,5-anhydro-D-glucitol + NADP(+) = 1,5-anhydro-D-fructose + NADPH + H(+). Its activity is regulated as follows. Inhibited by p-chloromercuribenzoic acid and alkyliodines. Functionally, catalyzes the NADPH-dependent reduction of 1,5-anhydro-D-fructose (AF) to 1,5-anhydro-D-glucitol. The sequence is that of 1,5-anhydro-D-fructose reductase (Akr1e2) from Mus musculus (Mouse).